The sequence spans 361 residues: Queuine tRNA-ribosyltransferase (361 aa).

Residue aspartate 92 is the Proton acceptor of the active site. Substrate-binding positions include 92–96 (DSGGF), aspartate 146, glutamine 189, and glycine 216. The interval 247 to 253 (GVGKPAD) is RNA binding. The Nucleophile role is filled by aspartate 266. The segment at 271–275 (TRSGR) is RNA binding; important for wobble base 34 recognition. Residues cysteine 304, cysteine 306, cysteine 309, and histidine 335 each contribute to the Zn(2+) site.

The protein belongs to the queuine tRNA-ribosyltransferase family. In terms of assembly, homodimer. Within each dimer, one monomer is responsible for RNA recognition and catalysis, while the other monomer binds to the replacement base PreQ1. It depends on Zn(2+) as a cofactor.

The enzyme catalyses 7-aminomethyl-7-carbaguanine + guanosine(34) in tRNA = 7-aminomethyl-7-carbaguanosine(34) in tRNA + guanine. Its pathway is tRNA modification; tRNA-queuosine biosynthesis. Catalyzes the base-exchange of a guanine (G) residue with the queuine precursor 7-aminomethyl-7-deazaguanine (PreQ1) at position 34 (anticodon wobble position) in tRNAs with GU(N) anticodons (tRNA-Asp, -Asn, -His and -Tyr). Catalysis occurs through a double-displacement mechanism. The nucleophile active site attacks the C1' of nucleotide 34 to detach the guanine base from the RNA, forming a covalent enzyme-RNA intermediate. The proton acceptor active site deprotonates the incoming PreQ1, allowing a nucleophilic attack on the C1' of the ribose to form the product. After dissociation, two additional enzymatic reactions on the tRNA convert PreQ1 to queuine (Q), resulting in the hypermodified nucleoside queuosine (7-(((4,5-cis-dihydroxy-2-cyclopenten-1-yl)amino)methyl)-7-deazaguanosine). This chain is Queuine tRNA-ribosyltransferase, found in Rickettsia felis (strain ATCC VR-1525 / URRWXCal2) (Rickettsia azadi).